The sequence spans 3477 residues: Abnormal spindle-like microcephaly-associated protein homolog (3477 aa).

The tract at residues 1-34 (MANRRVGRGCWEVSPTERRPPAGLRGPATEEEAS) is disordered. A phosphoserine mark is found at Ser283, Ser367, Ser392, and Ser425. Over residues 417 to 433 (NENSQVPQSPQDWSKSE) the composition is skewed to polar residues. Disordered regions lie at residues 417–436 (NENSQVPQSPQDWSKSEVSP) and 563–583 (MPSSTTASVARKRKSDESMED). Ser605 is subject to Phosphoserine. Positions 920–1056 (KASKEILLAF…LLWKIAFAFQ (137 aa)) constitute a Calponin-homology (CH) 1 domain. Residues 1057 to 1076 (VDISLNLDQLKEEIAFLKHT) are a coiled coil. Ser1103 is subject to Phosphoserine. Residues 1110–1261 (SENIKLLMDW…YLSFLCARLL (152 aa)) enclose the Calponin-homology (CH) 2 domain. 39 consecutive IQ domains span residues 1347–1378 (QNKAASLIQGYWRRYSTRKRFLKLKYYSIILQ), 1393–1422 (YLWATVTIQRHWRAYLRRKQDQQRYEMLKS), 1582–1613 (LKKTIIKFQAHIRKHQQLQKYKKMKKAAVIIQ), 1605–1634 (MKKAAVIIQTHFRAYIFARKVLASYQKTRS), 1632–1661 (TRSAVIVLQSAYRGMQARKMYIHILTSVIK), 1655–1684 (ILTSVIKIQSYYRAYVSKKEFLSLKNATIK), 1728–1757 (MRESCIKLQAFVRGYLVRKQMRLQRKAVIS), 1751–1782 (QRKAVISLQSYFRMRKARQYYLKMYKAIIVIQ), 1801–1830 (VKKAATCLQAAYRGYKIRQLIKQQSIAAVK), 1824–1853 (QSIAAVKIQSAFRGYNKRVKYQSVLQSIIK), 1874–1903 (TKAAVVSLQSAYRGWKVRKQIRREHQAALK), 1897–1928 (EHQAALKIQSAFRMAKAQKQFRLFKTAALVIQ), 1947–1978 (LRHAVLILQSMWKGKTLRRQLQRQHKCAIIIQ), 1970–2001 (QHKCAIIIQSYYRMHVQQKKWKIMKKAALLIQ), 2020–2049 (TKAAVVTLQSAYRGMKVRKRIKDCNKAAVT), 2043–2074 (CNKAAVTIQSKYRAYKTKKKYATYRASAIIIQ), 2093–2124 (LKKTAIKIQSVYRGIRVRRHIQHMHRAATYIK), 2116–2147 (MHRAATYIKAMFKMHQSRISYHTMRKAAIVIQ), 2239–2270 (LRHSVIYIQAIFRGKKARRHLKMMHVAATLIQ), 2262–2293 (MHVAATLIQRRFRTLMMRRRFLSLKKTAVWIQ), 2311–2342 (VQNAVIKIQSSYRRWMIRKKMREMHRAATFIQ), 2334–2365 (MHRAATFIQATFRMQRVHMRYQALKQASVVIQ), 2384–2415 (QRHSAVILQAAFRGMKTRRHLKSMHSSATLIQ), 2407–2438 (MHSSATLIQSRFRSLLVRRRFISLKKATIFVQ), 2457–2488 (LRKAAITVQSSYRRLMVKKKLQEMQRAAVLIQ), 2480–2511 (MQRAAVLIQATFRMHRTYVTFQTWKQASILIQ), 2530–2561 (QWHSAVVIQAAYKGMKARQHLREKHKAAIIIQ), 2624–2653 (QHQAAIIIQKHCKAFKIRKHYLHLRATVVS), 2665–2696 (RTQAVICIQSYYRGFKVRRDIQNMHRAATLIQ), 2688–2719 (MHRAATLIQSFYRMHRAKVDYQTKKTAIVVIQ), 2738–2767 (VQKSVRTIQAAFRGMKVRQKLKNISEEKMA), 2814–2845 (QSRAAVTIQKAFRRMVTRKVETQKCAALRIQF), 2859–2890 (QKRAAITLQHYFRTWQTRKQFLLYRKAAVVLQ), 2909–2938 (IRSSVIIIQARSKGFIQKRKFQEIKNSTIK), 2932–2963 (IKNSTIKIQAMWRRYRAKKYLCKVKAACKIQA), 2954–2985 (KVKAACKIQAWYRCWRAHKEYLAILKAVKIIQ), 3029–3060 (RHRAACLIQAHYRGYKERQVFLRQKSAALIIQ), 3079–3110 (FKKSTVILQALVRGWLVRKRILEQRTKIRLLH), and 3204–3235 (FTSGIIKIQALWRGYSWRKKNDCTKIKAIRLS).

Its subcellular location is the cytoplasm. It is found in the cytoskeleton. It localises to the spindle. The protein localises to the nucleus. Its function is as follows. Probable role in mitotic spindle regulation and coordination of mitotic processes. May have a preferential role in regulating neurogenesis. The sequence is that of Abnormal spindle-like microcephaly-associated protein homolog (ASPM) from Colobus guereza (Mantled guereza).